The primary structure comprises 938 residues: Glutamate receptor 3.1 (938 aa).

Positions 1-20 (MKFIFYLFSIFCCLCSCAQS) are cleaved as a signal peptide. At 21–588 (QNISGRPDAV…GGWAFLQPFT (568 aa)) the chain is on the extracellular side. N22, N39, N59, N340, N418, N436, and N551 each carry an N-linked (GlcNAc...) asparagine glycan. A helical membrane pass occupies residues 589 to 609 (IKMWTVTGLFFLIIGTVVWML). The Cytoplasmic portion of the chain corresponds to 610 to 618 (EHRINDEFR). Residues 619 to 639 (GPPAKQLITVFWFSFSTLFFA) traverse the membrane as a helical segment. Residues 640–650 (HREDTRSTLGR) are Cytoplasmic-facing. A helical membrane pass occupies residues 651–671 (FVIIIWLFVVLIIQSSYTASL). Topologically, residues 672-830 (TSILTVQQLT…ELDQDPDRLD (159 aa)) are extracellular. Residues 831–851 (VYSFSALFLICGLACIFALAI) traverse the membrane as a helical segment. The Cytoplasmic portion of the chain corresponds to 852–938 (HACNLFYQYS…SGSGSTTASC (87 aa)). The tract at residues 906-938 (AAKEKASGLGGSGGSMSGVSFTSSGSGSTTASC) is disordered. Low complexity predominate over residues 922-938 (SGVSFTSSGSGSTTASC).

The protein belongs to the glutamate-gated ion channel (TC 1.A.10.1) family. As to quaternary structure, may form homomultimers. Expressed at low levels in roots and leaves.

Its subcellular location is the membrane. Its function is as follows. Glutamate-gated receptor that probably acts as a non-selective cation channel. Involved in root development. May regulate cell proliferation and cell death in the root apex. The protein is Glutamate receptor 3.1 (GLR3.1) of Oryza sativa subsp. japonica (Rice).